The chain runs to 372 residues: Alanine dehydrogenase (372 aa).

The substrate site is built by arginine 15 and lysine 75. The active-site Proton donor/acceptor is the histidine 96. NAD(+)-binding positions include serine 134, isoleucine 178–alanine 179, aspartate 198, serine 220, valine 239–leucine 240, isoleucine 267–aspartate 270, arginine 280, and valine 299–methionine 302. The active-site Proton donor/acceptor is aspartate 270.

The protein belongs to the AlaDH/PNT family. In terms of assembly, homohexamer.

Its subcellular location is the cytoplasm. The catalysed reaction is L-alanine + NAD(+) + H2O = pyruvate + NH4(+) + NADH + H(+). Its pathway is amino-acid degradation; L-alanine degradation via dehydrogenase pathway; NH(3) and pyruvate from L-alanine: step 1/1. Inhibited by p-chloromercuribenzoate and HgCl(2) and by Cu(2+) and Pb(2+) salts, unaffected by amino acids such as D-alanine and beta-alanine or by nucleotides or nucleosides. Its function is as follows. Catalyzes the reversible reductive amination of pyruvate to L-alanine. Prefers L-alanine for oxidative deamination, other substrates are poorly reactive. In the other direction 2-oxobutyrate is almost as reactive as pyruvate. Ammonia is the sole amino donor for the reductive amination of pyruvate, NADPH is inert. Reductive amination proceeds through a sequential, ordered ternary-binary mechanism, where NADH binds first followed by ammonia and pyruvate; the products are released in the order L-alanine and NAD(+). A key factor in the assimilation of L-alanine as an energy source via the tricarboxylic acid cycle during sporulation. The protein is Alanine dehydrogenase (ald) of Lysinibacillus sphaericus (Bacillus sphaericus).